The chain runs to 300 residues: Putative heme-binding peroxidase (300 aa).

Residue His39 is the Proton acceptor of the active site. Disordered regions lie at residues 44-64 and 116-135; these read YDKS…EAEG and GRTD…LPDA. Residues 116–126 show a composition bias toward basic and acidic residues; sequence GRTDFADDSRV. His163 is a heme b binding site. Catalysis depends on Trp179, which acts as the Tryptophan radical intermediate.

This sequence belongs to the peroxidase family. Cytochrome c peroxidase subfamily. The cofactor is heme b.

In terms of biological role, destroys radicals which are normally produced within the cells and which are toxic to biological systems. The polypeptide is Putative heme-binding peroxidase (Pyricularia oryzae (strain 70-15 / ATCC MYA-4617 / FGSC 8958) (Rice blast fungus)).